The sequence spans 220 residues: Ribosomal RNA large subunit methyltransferase E (220 aa).

Residues Gly-60, Trp-62, Asp-92, Asp-108, and Asp-133 each coordinate S-adenosyl-L-methionine. Lys-173 acts as the Proton acceptor in catalysis. The tract at residues 198-220 (KPKASRDKSSETFILGRQLKHPR) is disordered.

The protein belongs to the class I-like SAM-binding methyltransferase superfamily. RNA methyltransferase RlmE family.

It is found in the cytoplasm. The enzyme catalyses uridine(2552) in 23S rRNA + S-adenosyl-L-methionine = 2'-O-methyluridine(2552) in 23S rRNA + S-adenosyl-L-homocysteine + H(+). Functionally, specifically methylates the uridine in position 2552 of 23S rRNA at the 2'-O position of the ribose in the fully assembled 50S ribosomal subunit. The polypeptide is Ribosomal RNA large subunit methyltransferase E (Burkholderia cenocepacia (strain HI2424)).